Consider the following 276-residue polypeptide: AT-hook motif nuclear-localized protein 17 (276 aa).

Residues 1 to 10 (MKGEYREQKS) show a composition bias toward basic and acidic residues. Disordered stretches follow at residues 1–80 (MKGE…RDTD) and 212–248 (AEEE…SGGE). Low complexity-rich tracts occupy residues 20-31 (HQQQQQQQQQQH) and 40-49 (SSTVTPTVDD). The a.T hook DNA-binding region spans 56 to 68 (RRPRGRPPGSKNK). A PPC domain is found at 80–230 (DPPMSPYILE…GTGEREGQSP (151 aa)). The span at 212–227 (AEEEQKHSAGTGEREG) shows a compositional bias: basic and acidic residues. Residues 233–248 (SGGGEESGQMAGSGGE) are compositionally biased toward gly residues.

The protein resides in the nucleus. Transcription factor that specifically binds AT-rich DNA sequences related to the nuclear matrix attachment regions (MARs). The chain is AT-hook motif nuclear-localized protein 17 from Arabidopsis thaliana (Mouse-ear cress).